The chain runs to 231 residues: MSILVVTGTSTDVGKTVVTAALAAAAREAGLSVAVCKPAQTGVAPGGPGDLAEVTRLSGVTAVVELARYPEPLAPDTAARRSGLPMLRCADVVETVRALDDGHDLVLVEGAGGLLVRLGAEGFTLVDLARALDAPAVVVAAAGLGTLNHTELTIRALSAAGLACAGTVIGSWPDEPGLAERCNLDDLPAVTGVDVVGSVPAGSGRLASASFGAAASTWFDSTWLKSTLTRL.

12-17 (DVGKTV) contacts ATP. Thr16 contributes to the Mg(2+) binding site. The active site involves Lys37. Residue Thr41 participates in substrate binding. Residues Asp50, 109–112 (EGAG), 170–171 (GS), and 200–202 (PAG) each bind ATP. Residues Asp50 and Glu109 each coordinate Mg(2+).

The protein belongs to the dethiobiotin synthetase family. As to quaternary structure, homodimer. It depends on Mg(2+) as a cofactor.

It is found in the cytoplasm. The catalysed reaction is (7R,8S)-7,8-diammoniononanoate + CO2 + ATP = (4R,5S)-dethiobiotin + ADP + phosphate + 3 H(+). It participates in cofactor biosynthesis; biotin biosynthesis; biotin from 7,8-diaminononanoate: step 1/2. In terms of biological role, catalyzes a mechanistically unusual reaction, the ATP-dependent insertion of CO2 between the N7 and N8 nitrogen atoms of 7,8-diaminopelargonic acid (DAPA, also called 7,8-diammoniononanoate) to form a ureido ring. The polypeptide is ATP-dependent dethiobiotin synthetase BioD (Rhodococcus jostii (strain RHA1)).